Here is a 141-residue protein sequence, read N- to C-terminus: Putative pre-16S rRNA nuclease (141 aa).

This sequence belongs to the YqgF nuclease family.

It is found in the cytoplasm. In terms of biological role, could be a nuclease involved in processing of the 5'-end of pre-16S rRNA. The polypeptide is Putative pre-16S rRNA nuclease (Dictyoglomus turgidum (strain DSM 6724 / Z-1310)).